Here is a 130-residue protein sequence, read N- to C-terminus: DNA-directed RNA polymerase subunit omega (130 aa).

Positions 109 to 130 are disordered; sequence EEELLKGLEGLAPPEEQPEEDE.

This sequence belongs to the RNA polymerase subunit omega family. The RNAP catalytic core consists of 2 alpha, 1 beta, 1 beta' and 1 omega subunit. When a sigma factor is associated with the core the holoenzyme is formed, which can initiate transcription.

The enzyme catalyses RNA(n) + a ribonucleoside 5'-triphosphate = RNA(n+1) + diphosphate. Its function is as follows. Promotes RNA polymerase assembly. Latches the N- and C-terminal regions of the beta' subunit thereby facilitating its interaction with the beta and alpha subunits. The chain is DNA-directed RNA polymerase subunit omega from Rhodopseudomonas palustris (strain BisB5).